The sequence spans 354 residues: Interferon-inducible protein AIM2 (354 aa).

The 87-residue stretch at 1-87 (MESEYREMLL…ANALEEKKKE (87 aa)) folds into the Pyrin domain. The interval 95-124 (NTKKRGTQKVENRSQAENCSAASATRSDND) is disordered. Polar residues predominate over residues 109-120 (QAENCSAASATR). Positions 144 to 341 (MVAEQEAIRE…SGPCSFFKVI (198 aa)) constitute an HIN-200 domain.

The protein belongs to the HIN-200 family. Self-associates; forms homooligomers in response to cytosolic double-stranded DNA (dsDNA) and the dsDNA seems to serve as oligomerization platform. Component of AIM2 inflammasome, which consists of a signal sensor component (AIM2), an adapter (PYCARD/ASC), which recruits an effector pro-inflammatory caspase (CASP1). Interacts (via pyrin domain) with PYCARD/ASC (via pyrin domain); interaction is direct. Component of the AIM2 PANoptosome complex, a multiprotein complex that drives inflammatory cell death (PANoptosis). Interacts with EIF2AK2/PKR. Interacts with MAPRE1. Interacts (via HIN-200 domain) with IFI202 (via HIN-200 domain 2); preventing activation of the AIM2 inflammasome. Interacts with RACK1; promoting association with PP2A phosphatase and dephosphorylation of AKT1. Interacts with TRIM11; promoting AIM2 recruitment to autophagosomes and autophagy-dependent degradation. Degraded via selective autophagy following interaction with TRIM11. In terms of tissue distribution, expressed in developing neurons. Highly expressed in regulatory T-cells (Treg).

The protein resides in the cytoplasm. The protein localises to the inflammasome. It localises to the nucleus. With respect to regulation, inactive in absence of double-stranded DNA (dsDNA). Homooligomerizes upon binding to dsDNA, dsDNA serving as an oligomerization platform. AIM2 requires large dsDNA to generate a structural template that couples dsDNA ligand-binding and homooligomerization. Homooligomerization is followed by recruitment of PYCARD/ASC to initiate speck formation (nucleation). AIM2 and PYCARD/ASC homooligomer filaments assemble bidirectionally and the recognition between AIM2 and PYCARD/ASC oligomers occurs in a head-to-tail manner. Clustered PYCARD/ASC nucleates the formation of CASP1 filaments through the interaction of their respective CARD domains, acting as a platform for CASP1 polymerization and activation. Active CASP1 then specifically processes protein precursors, such as gasdermin-D (GSDMD), IL1B and IL18, leading to the release of mature cytokines in the extracellular milieu or pyroptosis, depending on cell type. AIM2 can be activated in response to events that cause genomic DNA (HIV protease inhibitor nelfinavir) or mitochondrial DNA release in the cytoplasm (such as Perfluoroalkyl substance pollutants or cholesterol overload). Activation of the AIM2 inflammasome is inhibited by IFI202. Activation of the AIM2 inflammasome is inhibited by TRIM11, which promotes autophagy-dependent degradation of AIM2. Sensor component of the AIM2 inflammasome, which mediates inflammasome activation in response to the presence of double-stranded DNA (dsDNA) in the cytosol, leading to subsequent pyroptosis. Inflammasomes are supramolecular complexes that assemble in the cytosol in response to pathogens and other damage-associated signals and play critical roles in innate immunity and inflammation. Acts as a recognition receptor (PRR): specifically recognizes and binds dsDNA in the cytosol, and mediates the formation of the inflammasome polymeric complex composed of AIM2, CASP1 and PYCARD/ASC. Recruitment of pro-caspase-1 (proCASP1) to the AIM2 inflammasome promotes caspase-1 (CASP1) activation, which subsequently cleaves and activates inflammatory cytokines IL1B and IL18 and gasdermin-D (GSDMD), promoting cytokine secretion. In some cells, CASP1 activation mediates cleavage and activation of GSDMD, triggering pyroptosis without promoting cytokine secretion. Detects cytosolic dsDNA of viral and bacterial origin in a non-sequence-specific manner. Involved in the DNA damage response caused by acute ionizing radiation by mediating pyroptosis of intestinal epithelial cells and bone marrow cells in response to double-strand DNA breaks. Mechanistically, AIM2 senses DNA damage in the nucleus to mediate inflammasome assembly and inflammatory cell death. Also acts as a regulator of neurodevelopment via its role in the DNA damage response: acts by promoting neural cell death in response to DNA damage in the developing brain, thereby purging genetically compromised cells of the central nervous system. Pyroptosis mediated by the AIM2 inflammasome in response to DNA damage is dependent on GSDMD without involving IL1B and IL18 cytokine secretion. Also acts as a mediator of pyroptosis, necroptosis and apoptosis (PANoptosis), an integral part of host defense against pathogens, in response to bacterial infection. Can also trigger PYCARD/ASC-dependent, caspase-1-independent cell death that involves caspase-8 (CASP8). In terms of biological role, also acts as a tumor suppressor independently of its role in inflammatory response. Able to suppress overt cell proliferation in enterocytes: restricts stem cell proliferation in the intestinal mucosa in an inflammasome-independent manner, contributing to a decrease in the likelihood of colorectal cancer development. AIM2 suppresses cell proliferation by inhibiting phosphorylation of AKT1 at 'Ser-473', preventing AKT1 activation and AKT-mTOR signaling pathway. Inhibits AKT1 phosphorylation both by inhibiting the activity of PRKDC/DNA-PK kinase and promoting dephosphorylation by PP2A phosphatase. Also acts as a key regulator of regulatory T-cells (Treg) homeostasis by promoting their stability: acts by preventing AKT1 activation. Its role in Treg homeostasis is important to restain autoimmune diseases. This is Interferon-inducible protein AIM2 from Mus musculus (Mouse).